Here is a 188-residue protein sequence, read N- to C-terminus: Succinate dehydrogenase [ubiquinone] cytochrome b large subunit, mitochondrial (188 aa).

The N-terminal 31 residues, 1-31 (MSLLPYNATLCRVLRHNVKFIRSVQTSAARV), are a transit peptide targeting the mitochondrion. The Mitochondrial matrix portion of the chain corresponds to 32-69 (SAEKTPIQVWGWDYLMRQRALKRPIAPHLTIYKPQMTW). A helical transmembrane segment spans residues 70–95 (MVSGLHRVTGCAMAGTLLIGGVGFSV). A rhodoquinol is bound by residues S72 and R76. A ubiquinone is bound by residues S72 and R76. Over 96-113 (LPLDFTTFVEFIRGLGIP) the chain is Mitochondrial intermembrane. The helical transmembrane segment at 114–140 (WVILDTFKFIIAFPIAFHTLNGIRFIG) threads the bilayer. Heme b is bound at residue H131. Residues 141–153 (FDMAKGTDIPSIY) are Mitochondrial matrix-facing. The helical transmembrane segment at 154–176 (RGAYLVLGLAALISLAVVVYPRW) threads the bilayer. At 177–188 (ERHKKATLPTNH) the chain is on the mitochondrial intermembrane side.

The protein belongs to the cytochrome b558 family. As to quaternary structure, component of the mitochondrial electron transport chain complex II composed of four subunits: a flavoprotein (Fp), an iron-sulfur protein (Ip), and a large cytochrome b (CybL) subunit and a small cytochrome b (CybS) subunit. There are 2 developmental stage-specific forms of complex II which have the Ip and CybL subunits in common. Complex II from the free-living larvae (aerobic environment) acts as a succinate dehydrogenase and is composed of the common subunit Ip and CybL and the stage specific subunits FpL and CybSL. Complex II from parasitic larvae and adults (anaerobic environment) acts as a fumarate reductase and is composed of the common subunit Ip and CybL and the stage specific subunits FpA and CybSA. The cofactor is heme b. In terms of tissue distribution, expressed in adult muscles (at protein level).

Its subcellular location is the mitochondrion inner membrane. It functions in the pathway carbohydrate metabolism; tricarboxylic acid cycle; fumarate from succinate (eukaryal route): step 1/1. Functionally, membrane-bound large subunit (CybL) of the mitochondrial electron transport chain complex II, which together with the membrane-bound small subunit (CybS), anchor the catalytic subunits to the inner mitochondria membrane. During the free-living egg-larvae stages, which occur in an aerobic environment, complex II acts as a succinate dehydrogenase by transferring electrons from succinate to ubiquinone. During the parasitic larvae and adult stages, which occur in an anaerobic environment, complex II acts as a fumarate reductase by transferring electrons from rhodoquinol to fumarate. This chain is Succinate dehydrogenase [ubiquinone] cytochrome b large subunit, mitochondrial, found in Ascaris suum (Pig roundworm).